A 353-amino-acid chain; its full sequence is Guanine nucleotide-binding protein G(q) subunit alpha (353 aa).

S-palmitoyl cysteine attachment occurs at residues C3 and C4. Residues 32 to 353 (RELKLLLLGT…QLNLKEYNLV (322 aa)) form the G-alpha domain. The segment at 35-48 (KLLLLGTGESGKST) is G1 motif. Residues 40–47 (GTGESGKS), 174–180 (LRVRVPT), 199–203 (DVGGQ), 268–271 (NKKD), and A325 contribute to the GTP site. Residues S47 and T180 each coordinate Mg(2+). The tract at residues 172-180 (DILRVRVPT) is G2 motif. The G3 motif stretch occupies residues 195–204 (FRMVDVGGQR). The tract at residues 264–271 (ILFLNKKD) is G4 motif. Residues 323–328 (TCATDT) form a G5 motif region.

The protein belongs to the G-alpha family. G(q) subfamily. As to quaternary structure, g proteins are composed of 3 units; alpha, beta and gamma. The alpha chain contains the guanine nucleotide binding site.

Guanine nucleotide-binding proteins (G proteins) are involved as modulators or transducers in various transmembrane signaling systems. The protein is Guanine nucleotide-binding protein G(q) subunit alpha (SCGQA) of Mizuhopecten yessoensis (Japanese scallop).